Consider the following 691-residue polypeptide: Elongation factor G (691 aa).

The tr-type G domain maps to 8–282 (ERVRNIGIAA…AVVDYLPAPV (275 aa)). GTP contacts are provided by residues 17–24 (AHIDAGKT), 81–85 (DTPGH), and 135–138 (NKMD).

This sequence belongs to the TRAFAC class translation factor GTPase superfamily. Classic translation factor GTPase family. EF-G/EF-2 subfamily.

The protein localises to the cytoplasm. Catalyzes the GTP-dependent ribosomal translocation step during translation elongation. During this step, the ribosome changes from the pre-translocational (PRE) to the post-translocational (POST) state as the newly formed A-site-bound peptidyl-tRNA and P-site-bound deacylated tRNA move to the P and E sites, respectively. Catalyzes the coordinated movement of the two tRNA molecules, the mRNA and conformational changes in the ribosome. The polypeptide is Elongation factor G (Prochlorococcus marinus (strain MIT 9211)).